A 239-amino-acid polypeptide reads, in one-letter code: Phosphoribosylaminoimidazole-succinocarboxamide synthase (239 aa).

This sequence belongs to the SAICAR synthetase family.

The catalysed reaction is 5-amino-1-(5-phospho-D-ribosyl)imidazole-4-carboxylate + L-aspartate + ATP = (2S)-2-[5-amino-1-(5-phospho-beta-D-ribosyl)imidazole-4-carboxamido]succinate + ADP + phosphate + 2 H(+). The protein operates within purine metabolism; IMP biosynthesis via de novo pathway; 5-amino-1-(5-phospho-D-ribosyl)imidazole-4-carboxamide from 5-amino-1-(5-phospho-D-ribosyl)imidazole-4-carboxylate: step 1/2. In Shouchella clausii (strain KSM-K16) (Alkalihalobacillus clausii), this protein is Phosphoribosylaminoimidazole-succinocarboxamide synthase.